A 309-amino-acid polypeptide reads, in one-letter code: Homoserine kinase (309 aa).

95–105 (PQSRGLGSSAA) is an ATP binding site.

The protein belongs to the GHMP kinase family. Homoserine kinase subfamily.

It is found in the cytoplasm. It catalyses the reaction L-homoserine + ATP = O-phospho-L-homoserine + ADP + H(+). Its pathway is amino-acid biosynthesis; L-threonine biosynthesis; L-threonine from L-aspartate: step 4/5. In terms of biological role, catalyzes the ATP-dependent phosphorylation of L-homoserine to L-homoserine phosphate. This is Homoserine kinase from Corynebacterium glutamicum (strain R).